Reading from the N-terminus, the 338-residue chain is Aspartate-semialdehyde dehydrogenase (338 aa).

Residues 9–12 (TGQV) and 37–38 (RS) contribute to the NADP(+) site. Arginine 93 is a binding site for phosphate. Cysteine 123 serves as the catalytic Acyl-thioester intermediate. Glutamine 150 provides a ligand contact to substrate. 153-154 (SG) provides a ligand contact to NADP(+). Lysine 220 contacts phosphate. Arginine 242 is a substrate binding site. Catalysis depends on histidine 249, which acts as the Proton acceptor. Asparagine 316 is a binding site for NADP(+).

The protein belongs to the aspartate-semialdehyde dehydrogenase family. In terms of assembly, homodimer.

It catalyses the reaction L-aspartate 4-semialdehyde + phosphate + NADP(+) = 4-phospho-L-aspartate + NADPH + H(+). The protein operates within amino-acid biosynthesis; L-lysine biosynthesis via DAP pathway; (S)-tetrahydrodipicolinate from L-aspartate: step 2/4. It functions in the pathway amino-acid biosynthesis; L-methionine biosynthesis via de novo pathway; L-homoserine from L-aspartate: step 2/3. It participates in amino-acid biosynthesis; L-threonine biosynthesis; L-threonine from L-aspartate: step 2/5. Catalyzes the NADPH-dependent formation of L-aspartate-semialdehyde (L-ASA) by the reductive dephosphorylation of L-aspartyl-4-phosphate. This chain is Aspartate-semialdehyde dehydrogenase, found in Streptomyces akiyoshiensis.